The primary structure comprises 95 residues: Co-chaperonin GroES (95 aa).

The protein belongs to the GroES chaperonin family. In terms of assembly, heptamer of 7 subunits arranged in a ring. Interacts with the chaperonin GroEL.

It localises to the cytoplasm. Its function is as follows. Together with the chaperonin GroEL, plays an essential role in assisting protein folding. The GroEL-GroES system forms a nano-cage that allows encapsulation of the non-native substrate proteins and provides a physical environment optimized to promote and accelerate protein folding. GroES binds to the apical surface of the GroEL ring, thereby capping the opening of the GroEL channel. The chain is Co-chaperonin GroES from Rickettsia typhi (strain ATCC VR-144 / Wilmington).